The sequence spans 449 residues: Xaa-Pro dipeptidase (449 aa).

Residues aspartate 246, aspartate 257, histidine 345, glutamate 390, and glutamate 429 each coordinate Mn(2+).

Belongs to the peptidase M24B family. Bacterial-type prolidase subfamily. Mn(2+) is required as a cofactor.

The catalysed reaction is Xaa-L-Pro dipeptide + H2O = an L-alpha-amino acid + L-proline. Splits dipeptides with a prolyl residue in the C-terminal position. This is Xaa-Pro dipeptidase from Yersinia enterocolitica serotype O:8 / biotype 1B (strain NCTC 13174 / 8081).